The primary structure comprises 307 residues: Cytochrome f (307 aa).

An N-terminal signal peptide occupies residues 1 to 24 (MKKNLFLVSVFASLFVGTANNALA). Residues Y25, C45, C48, and H49 each contribute to the heme site. Residues 273 to 293 (LQGLVIFLGFVLIAQVFLVLK) traverse the membrane as a helical segment.

The protein belongs to the cytochrome f family. In terms of assembly, the 4 large subunits of the cytochrome b6-f complex are cytochrome b6, subunit IV (17 kDa polypeptide, petD), cytochrome f and the Rieske protein, while the 4 small subunits are PetG, PetL, PetM and PetN. The complex functions as a dimer. Heme is required as a cofactor.

It is found in the plastid. It localises to the chloroplast thylakoid membrane. Component of the cytochrome b6-f complex, which mediates electron transfer between photosystem II (PSII) and photosystem I (PSI), cyclic electron flow around PSI, and state transitions. This is Cytochrome f from Ostreococcus tauri.